Here is a 452-residue protein sequence, read N- to C-terminus: Phosphoglucosamine mutase (452 aa).

The active-site Phosphoserine intermediate is Ser-108. The Mg(2+) site is built by Ser-108, Asp-247, Asp-249, and Asp-251. Ser-108 carries the phosphoserine modification.

This sequence belongs to the phosphohexose mutase family. Requires Mg(2+) as cofactor. In terms of processing, activated by phosphorylation.

It catalyses the reaction alpha-D-glucosamine 1-phosphate = D-glucosamine 6-phosphate. In terms of biological role, catalyzes the conversion of glucosamine-6-phosphate to glucosamine-1-phosphate. The sequence is that of Phosphoglucosamine mutase from Paraburkholderia xenovorans (strain LB400).